A 24-amino-acid chain; its full sequence is U4-ctenitoxin-Co1b (24 aa).

In terms of processing, disulfide bonds are present. In terms of tissue distribution, expressed by the venom gland.

Its subcellular location is the secreted. In terms of biological role, omega-agatoxins are antagonists of voltage-gated calcium channels (Cav). In Ctenus ornatus (Brazilian spider), this protein is U4-ctenitoxin-Co1b.